We begin with the raw amino-acid sequence, 301 residues long: Cutinase (301 aa).

An N-terminal signal peptide occupies residues 1-40; the sequence is MAVMTPRRERSSLLSRALQVTAAAATALVTAVSLAAPAHA. Tyr100 serves as a coordination point for poly(ethylene terephthalate). Ser170 acts as the Nucleophile in catalysis. Poly(ethylene terephthalate) contacts are provided by Met171 and Trp195. Catalysis depends on charge relay system residues Asp216 and His248. Cys281 and Cys299 are joined by a disulfide.

Belongs to the AB hydrolase superfamily.

The protein localises to the secreted. Its subcellular location is the periplasm. The catalysed reaction is a butanoate ester + H2O = an aliphatic alcohol + butanoate + H(+). It catalyses the reaction (ethylene terephthalate)(n) + H2O = (ethylene terephthalate)(n-1) + 4-[(2-hydroxyethoxy)carbonyl]benzoate + H(+). The enzyme catalyses cutin + H2O = cutin monomers.. With respect to regulation, activated by magnesium ions. Activated by calcium ions. Inhibited by the serine hydrolase inhibitor phenylmethanesulfonyl fluoride (PMSF). Its function is as follows. Catalyzes the hydrolysis of cutin, a polyester that forms the structure of plant cuticle. Shows esterase activity towards p-nitrophenol-linked aliphatic esters (pNP-aliphatic esters). Also hydrolyzes the triglyceride triolein. Capable of degrading the plastic poly(ethylene terephthalate) (PET), the most abundant polyester plastic in the world. The sequence is that of Cutinase from Thermobifida fusca (strain YX).